Consider the following 192-residue polypeptide: Transcription termination/antitermination protein NusG (192 aa).

Residues 140-168 form the KOW domain; it reads VGEIVTVTDGPFETFMGTVEEIDQEKNRL.

The protein belongs to the NusG family.

Participates in transcription elongation, termination and antitermination. This Rickettsia conorii (strain ATCC VR-613 / Malish 7) protein is Transcription termination/antitermination protein NusG.